Here is a 92-residue protein sequence, read N- to C-terminus: MVRSVWKGPFVEGSLLKKADAARASGRHDVIKIWSRRSTILPQFVGLVFGVYNGHKHVPVSVNEEMVGHKFGEFSPTRTFHGHSGDKKAKRA.

This sequence belongs to the universal ribosomal protein uS19 family.

In terms of biological role, protein S19 forms a complex with S13 that binds strongly to the 16S ribosomal RNA. This chain is Small ribosomal subunit protein uS19, found in Nitrobacter hamburgensis (strain DSM 10229 / NCIMB 13809 / X14).